The sequence spans 163 residues: Glycine cleavage system H protein, mitochondrial (163 aa).

A mitochondrion-targeting transit peptide spans 1 to 34 (MALRMWASSAANALGVSCAPKSHLLPALSLSRCF). The Lipoyl-binding domain maps to 56 to 137 (VATIGITDHA…YEEGWMVKVK (82 aa)). Lys-96 is modified (N6-lipoyllysine).

It belongs to the GcvH family. As to quaternary structure, the glycine cleavage system is composed of four proteins: P, T, L and H. It depends on (R)-lipoate as a cofactor.

Its subcellular location is the mitochondrion. The glycine cleavage system catalyzes the degradation of glycine. The H protein shuttles the methylamine group of glycine from the P protein to the T protein. In Mesembryanthemum crystallinum (Common ice plant), this protein is Glycine cleavage system H protein, mitochondrial (GDCSH).